A 349-amino-acid polypeptide reads, in one-letter code: 3-methyl-2-oxobutanoate hydroxymethyltransferase (349 aa).

It belongs to the PanB family.

The catalysed reaction is 3-methyl-2-oxobutanoate + (6R)-5,10-methylene-5,6,7,8-tetrahydrofolate + H2O = 2-dehydropantoate + (6S)-5,6,7,8-tetrahydrofolate. It functions in the pathway cofactor biosynthesis; (R)-pantothenate biosynthesis; (R)-pantoate from 3-methyl-2-oxobutanoate: step 1/2. The protein is 3-methyl-2-oxobutanoate hydroxymethyltransferase (panB) of Emericella nidulans (strain FGSC A4 / ATCC 38163 / CBS 112.46 / NRRL 194 / M139) (Aspergillus nidulans).